Here is a 178-residue protein sequence, read N- to C-terminus: Cytochrome b6-f complex iron-sulfur subunit (178 aa).

The chain crosses the membrane as a helical span at residues 20–42 (LLTFGTATGVALGALYPVANYFM). A Rieske domain is found at 65–161 (KTGWLATHQA…VDIEDDAVLV (97 aa)). [2Fe-2S] cluster-binding residues include cysteine 107, histidine 109, cysteine 125, and histidine 128. Cysteine 112 and cysteine 127 are oxidised to a cystine.

This sequence belongs to the Rieske iron-sulfur protein family. The 4 large subunits of the cytochrome b6-f complex are cytochrome b6, subunit IV (17 kDa polypeptide, PetD), cytochrome f and the Rieske protein, while the 4 small subunits are PetG, PetL, PetM and PetN. The complex functions as a dimer. Requires [2Fe-2S] cluster as cofactor.

The protein resides in the cellular thylakoid membrane. The catalysed reaction is 2 oxidized [plastocyanin] + a plastoquinol + 2 H(+)(in) = 2 reduced [plastocyanin] + a plastoquinone + 4 H(+)(out). Functionally, component of the cytochrome b6-f complex, which mediates electron transfer between photosystem II (PSII) and photosystem I (PSI), cyclic electron flow around PSI, and state transitions. In Prochlorococcus marinus (strain MIT 9312), this protein is Cytochrome b6-f complex iron-sulfur subunit.